The chain runs to 254 residues: Hydroxyacylglutathione hydrolase (254 aa).

Residues H54, H56, D58, H59, H111, D130, and H168 each coordinate Zn(2+).

The protein belongs to the metallo-beta-lactamase superfamily. Glyoxalase II family. As to quaternary structure, monomer. The cofactor is Zn(2+).

The enzyme catalyses an S-(2-hydroxyacyl)glutathione + H2O = a 2-hydroxy carboxylate + glutathione + H(+). It participates in secondary metabolite metabolism; methylglyoxal degradation; (R)-lactate from methylglyoxal: step 2/2. Thiolesterase that catalyzes the hydrolysis of S-D-lactoyl-glutathione to form glutathione and D-lactic acid. This chain is Hydroxyacylglutathione hydrolase, found in Legionella pneumophila (strain Lens).